The following is a 175-amino-acid chain: Crossover junction endodeoxyribonuclease RuvC (175 aa).

Catalysis depends on residues Asp-16, Glu-76, and Asp-148. Mg(2+) contacts are provided by Asp-16, Glu-76, and Asp-148.

The protein belongs to the RuvC family. In terms of assembly, homodimer which binds Holliday junction (HJ) DNA. The HJ becomes 2-fold symmetrical on binding to RuvC with unstacked arms; it has a different conformation from HJ DNA in complex with RuvA. In the full resolvosome a probable DNA-RuvA(4)-RuvB(12)-RuvC(2) complex forms which resolves the HJ. Mg(2+) serves as cofactor.

The protein localises to the cytoplasm. It catalyses the reaction Endonucleolytic cleavage at a junction such as a reciprocal single-stranded crossover between two homologous DNA duplexes (Holliday junction).. The RuvA-RuvB-RuvC complex processes Holliday junction (HJ) DNA during genetic recombination and DNA repair. Endonuclease that resolves HJ intermediates. Cleaves cruciform DNA by making single-stranded nicks across the HJ at symmetrical positions within the homologous arms, yielding a 5'-phosphate and a 3'-hydroxyl group; requires a central core of homology in the junction. The consensus cleavage sequence is 5'-(A/T)TT(C/G)-3'. Cleavage occurs on the 3'-side of the TT dinucleotide at the point of strand exchange. HJ branch migration catalyzed by RuvA-RuvB allows RuvC to scan DNA until it finds its consensus sequence, where it cleaves and resolves the cruciform DNA. The sequence is that of Crossover junction endodeoxyribonuclease RuvC from Bradyrhizobium sp. (strain BTAi1 / ATCC BAA-1182).